The chain runs to 416 residues: Glutamyl-tRNA reductase (416 aa).

Substrate contacts are provided by residues 49 to 52 (TCNR), Ser-105, 110 to 112 (EPQ), and Gln-116. Residue Cys-50 is the Nucleophile of the active site. 185 to 190 (GAGETI) provides a ligand contact to NADP(+).

The protein belongs to the glutamyl-tRNA reductase family. Homodimer.

The catalysed reaction is (S)-4-amino-5-oxopentanoate + tRNA(Glu) + NADP(+) = L-glutamyl-tRNA(Glu) + NADPH + H(+). Its pathway is porphyrin-containing compound metabolism; protoporphyrin-IX biosynthesis; 5-aminolevulinate from L-glutamyl-tRNA(Glu): step 1/2. Functionally, catalyzes the NADPH-dependent reduction of glutamyl-tRNA(Glu) to glutamate 1-semialdehyde (GSA). This is Glutamyl-tRNA reductase from Shewanella baltica (strain OS185).